A 76-amino-acid polypeptide reads, in one-letter code: Large ribosomal subunit protein uL24 (76 aa).

Belongs to the universal ribosomal protein uL24 family. In terms of assembly, part of the 50S ribosomal subunit.

Its function is as follows. One of two assembly initiator proteins, it binds directly to the 5'-end of the 23S rRNA, where it nucleates assembly of the 50S subunit. In terms of biological role, one of the proteins that surrounds the polypeptide exit tunnel on the outside of the subunit. The polypeptide is Large ribosomal subunit protein uL24 (Sulfurimonas denitrificans (strain ATCC 33889 / DSM 1251) (Thiomicrospira denitrificans (strain ATCC 33889 / DSM 1251))).